The sequence spans 464 residues: Argininosuccinate lyase (464 aa).

Ala-2 carries the post-translational modification N-acetylalanine. Lys-7 is subject to N6-acetyllysine. Ser-27 provides a ligand contact to 2-(N(omega)-L-arginino)succinate. Position 69 is an N6-acetyllysine (Lys-69). Residues Asn-114 and Thr-159 each coordinate 2-(N(omega)-L-arginino)succinate. His-160 (proton acceptor) is an active-site residue. Ser-281 (proton donor) is an active-site residue. N6-acetyllysine is present on Lys-288. Asn-289, Tyr-321, Gln-326, and Lys-329 together coordinate 2-(N(omega)-L-arginino)succinate.

It belongs to the lyase 1 family. Argininosuccinate lyase subfamily. Homotetramer. Forms tissue-specific complexes with ASS1, SLC7A1, HSP90AA1 and nitric oxide synthase NOS1, NOS2 or NOS3; the complex maintenance is independent of ASL catalytic function. In terms of processing, acetylation modifies enzyme activity in response to alterations of extracellular nutrient availability. Acetylation increased with trichostin A (TSA) or with nicotinamide (NAM). Glucose increases acetylation by about a factor of 3 with decreasing enzyme activity. Acetylation on Lys-288 is decreased on the addition of extra amino acids resulting in activation of enzyme activity.

The enzyme catalyses 2-(N(omega)-L-arginino)succinate = fumarate + L-arginine. Its pathway is amino-acid biosynthesis; L-arginine biosynthesis; L-arginine from L-ornithine and carbamoyl phosphate: step 3/3. It participates in nitrogen metabolism; urea cycle; L-arginine and fumarate from (N(omega)-L-arginino)succinate: step 1/1. Enzyme activity is regulated by acetylation. Its function is as follows. Catalyzes the reversible cleavage of L-argininosuccinate to fumarate and L-arginine, an intermediate step reaction in the urea cycle mostly providing for hepatic nitrogen detoxification into excretable urea as well as de novo L-arginine synthesis in nonhepatic tissues. Essential regulator of intracellular and extracellular L-arginine pools. As part of citrulline-nitric oxide cycle, forms tissue-specific multiprotein complexes with argininosuccinate synthase ASS1, transport protein SLC7A1 and nitric oxide synthase NOS1, NOS2 or NOS3, allowing for cell-autonomous L-arginine synthesis while channeling extracellular L-arginine to nitric oxide synthesis pathway. This chain is Argininosuccinate lyase (ASL), found in Macaca fascicularis (Crab-eating macaque).